Here is a 202-residue protein sequence, read N- to C-terminus: Ribosome maturation factor RimP (202 aa).

Belongs to the RimP family.

It localises to the cytoplasm. In terms of biological role, required for maturation of 30S ribosomal subunits. The sequence is that of Ribosome maturation factor RimP from Paracidovorax citrulli (strain AAC00-1) (Acidovorax citrulli).